We begin with the raw amino-acid sequence, 378 residues long: Ribosomal RNA large subunit methyltransferase G (378 aa).

This sequence belongs to the methyltransferase superfamily. RlmG family.

It localises to the cytoplasm. It carries out the reaction guanosine(1835) in 23S rRNA + S-adenosyl-L-methionine = N(2)-methylguanosine(1835) in 23S rRNA + S-adenosyl-L-homocysteine + H(+). Functionally, specifically methylates the guanine in position 1835 (m2G1835) of 23S rRNA. In Shigella boydii serotype 4 (strain Sb227), this protein is Ribosomal RNA large subunit methyltransferase G.